The chain runs to 870 residues: DNA mismatch repair protein MutS (870 aa).

620-627 (GPNMAGKS) provides a ligand contact to ATP.

This sequence belongs to the DNA mismatch repair MutS family.

This protein is involved in the repair of mismatches in DNA. It is possible that it carries out the mismatch recognition step. This protein has a weak ATPase activity. The protein is DNA mismatch repair protein MutS of Syntrophotalea carbinolica (strain DSM 2380 / NBRC 103641 / GraBd1) (Pelobacter carbinolicus).